The chain runs to 954 residues: Bifunctional glutamine synthetase adenylyltransferase/adenylyl-removing enzyme (954 aa).

The segment at 1-452 is adenylyl removase; that stretch reads MAVQKDSNKS…HFKATVGGEE (452 aa). Residues 458-954 are adenylyl transferase; that stretch reads EHWTAQLWNV…ILAIYQAILE (497 aa).

This sequence belongs to the GlnE family. Requires Mg(2+) as cofactor.

It carries out the reaction [glutamine synthetase]-O(4)-(5'-adenylyl)-L-tyrosine + phosphate = [glutamine synthetase]-L-tyrosine + ADP. The enzyme catalyses [glutamine synthetase]-L-tyrosine + ATP = [glutamine synthetase]-O(4)-(5'-adenylyl)-L-tyrosine + diphosphate. Functionally, involved in the regulation of glutamine synthetase GlnA, a key enzyme in the process to assimilate ammonia. When cellular nitrogen levels are high, the C-terminal adenylyl transferase (AT) inactivates GlnA by covalent transfer of an adenylyl group from ATP to specific tyrosine residue of GlnA, thus reducing its activity. Conversely, when nitrogen levels are low, the N-terminal adenylyl removase (AR) activates GlnA by removing the adenylyl group by phosphorolysis, increasing its activity. The regulatory region of GlnE binds the signal transduction protein PII (GlnB) which indicates the nitrogen status of the cell. The protein is Bifunctional glutamine synthetase adenylyltransferase/adenylyl-removing enzyme of Shewanella oneidensis (strain ATCC 700550 / JCM 31522 / CIP 106686 / LMG 19005 / NCIMB 14063 / MR-1).